A 365-amino-acid polypeptide reads, in one-letter code: UDP-N-acetylglucosamine--N-acetylmuramyl-(pentapeptide) pyrophosphoryl-undecaprenol N-acetylglucosamine transferase (365 aa).

UDP-N-acetyl-alpha-D-glucosamine-binding positions include 17–19 (TGG), N129, R167, S194, I250, 269–274 (ALTVSE), and Q295.

Belongs to the glycosyltransferase 28 family. MurG subfamily.

The protein localises to the cell inner membrane. The catalysed reaction is di-trans,octa-cis-undecaprenyl diphospho-N-acetyl-alpha-D-muramoyl-L-alanyl-D-glutamyl-meso-2,6-diaminopimeloyl-D-alanyl-D-alanine + UDP-N-acetyl-alpha-D-glucosamine = di-trans,octa-cis-undecaprenyl diphospho-[N-acetyl-alpha-D-glucosaminyl-(1-&gt;4)]-N-acetyl-alpha-D-muramoyl-L-alanyl-D-glutamyl-meso-2,6-diaminopimeloyl-D-alanyl-D-alanine + UDP + H(+). The protein operates within cell wall biogenesis; peptidoglycan biosynthesis. Cell wall formation. Catalyzes the transfer of a GlcNAc subunit on undecaprenyl-pyrophosphoryl-MurNAc-pentapeptide (lipid intermediate I) to form undecaprenyl-pyrophosphoryl-MurNAc-(pentapeptide)GlcNAc (lipid intermediate II). The polypeptide is UDP-N-acetylglucosamine--N-acetylmuramyl-(pentapeptide) pyrophosphoryl-undecaprenol N-acetylglucosamine transferase (Shewanella sediminis (strain HAW-EB3)).